Consider the following 559-residue polypeptide: Transmembrane E3 ubiquitin-protein ligase FLY2 (559 aa).

The first 29 residues, 1–29 (MNNLGNFGVWGFGFFSLSIWFAVLQQANG), serve as a signal peptide directing secretion. Topologically, residues 30–259 (LRPIRETARS…TSINVEVYYN (230 aa)) are lumenal. Residues 260–280 (KAVNYTLMVTFVSFLQVLLLI) traverse the membrane as a helical segment. The Cytoplasmic segment spans residues 281–294 (RQMEHSNTQSGAAK). The helical transmembrane segment at 295–315 (VSIVMIGQQAIMDSYLCLLHL) threads the bilayer. Residues 316-318 (TAG) lie on the Lumenal side of the membrane. A helical transmembrane segment spans residues 319 to 339 (ILVESLFNAFATAAFFKFVVF). At 340 to 370 (SIFEMRYLLSIWKATRPSTSGEGWETMRREL) the chain is on the cytoplasmic side. A helical membrane pass occupies residues 371 to 391 (SFLYSRFYGILLGGILLMYEF). Topologically, residues 392-394 (HNY) are lumenal. Residues 395–415 (MRPILLLMYSFWIPQIVANVV) traverse the membrane as a helical segment. The Cytoplasmic segment spans residues 416–423 (RDSRKPLH). Residues 424–444 (PYYILGMTVTRLAIPLYVFGC) form a helical membrane-spanning segment. At 445 to 458 (PKNFMRVEPSKAWC) the chain is on the lumenal side. Residues 459 to 479 (VSLCAFMGFQAGVLLLQHYFG) form a helical membrane-spanning segment. Residues 480–559 (SRCFVPRKLL…PTCRRPLPPA (80 aa)) are Cytoplasmic-facing. The RING-type; atypical zinc finger occupies 509 to 553 (CVICMTTIDLRHRINDCMVTPCEHIFHSGCLQRWMDIKMECPTCR).

Highly expressed in stems. Expressed in root xylem and seed coat.

It is found in the endomembrane system. The enzyme catalyses S-ubiquitinyl-[E2 ubiquitin-conjugating enzyme]-L-cysteine + [acceptor protein]-L-lysine = [E2 ubiquitin-conjugating enzyme]-L-cysteine + N(6)-ubiquitinyl-[acceptor protein]-L-lysine.. Its pathway is protein modification; protein ubiquitination. Functionally, E3 ubiquitin-protein ligase that may be involved in xylem development. The sequence is that of Transmembrane E3 ubiquitin-protein ligase FLY2 from Arabidopsis thaliana (Mouse-ear cress).